The primary structure comprises 309 residues: Probable non-structural 36.3 kDa protein (309 aa).

This chain is Probable non-structural 36.3 kDa protein (S6), found in Avena sativa (Oat).